Reading from the N-terminus, the 327-residue chain is Undecaprenyl-phosphate 4-deoxy-4-formamido-L-arabinose transferase (327 aa).

2 helical membrane-spanning segments follow: residues Leu-236 to Val-256 and Val-270 to Leu-290.

The protein belongs to the glycosyltransferase 2 family.

The protein localises to the cell inner membrane. The enzyme catalyses UDP-4-deoxy-4-formamido-beta-L-arabinose + di-trans,octa-cis-undecaprenyl phosphate = 4-deoxy-4-formamido-alpha-L-arabinopyranosyl di-trans,octa-cis-undecaprenyl phosphate + UDP. The protein operates within glycolipid biosynthesis; 4-amino-4-deoxy-alpha-L-arabinose undecaprenyl phosphate biosynthesis; 4-amino-4-deoxy-alpha-L-arabinose undecaprenyl phosphate from UDP-4-deoxy-4-formamido-beta-L-arabinose and undecaprenyl phosphate: step 1/2. It functions in the pathway bacterial outer membrane biogenesis; lipopolysaccharide biosynthesis. Functionally, catalyzes the transfer of 4-deoxy-4-formamido-L-arabinose from UDP to undecaprenyl phosphate. The modified arabinose is attached to lipid A and is required for resistance to polymyxin and cationic antimicrobial peptides. The chain is Undecaprenyl-phosphate 4-deoxy-4-formamido-L-arabinose transferase from Klebsiella pneumoniae (strain 342).